A 262-amino-acid polypeptide reads, in one-letter code: Troponin T, slow skeletal muscle (262 aa).

A compositionally biased stretch (acidic residues) spans 1 to 31 (MSDAEEQEYEEEQPEEEEAAEEEEAPEEPEP). Disordered regions lie at residues 1–59 (MSDA…PEGE), 107–153 (RAER…KKKV), and 165–197 (LVKAEQKRGKRQTGREMKQRILSERKKPLNIDH). A Phosphoserine; by CK2 modification is found at S2. The segment covering 32 to 41 (VAEREEERPK) has biased composition (basic and acidic residues). Over residues 43 to 55 (SRPVVPPLIPPKI) the composition is skewed to pro residues. Composition is skewed to basic and acidic residues over residues 107–149 (RAER…DDAK) and 177–197 (TGREMKQRILSERKKPLNIDH).

The protein belongs to the troponin T family. In terms of assembly, interacts with TPM3.

Its function is as follows. Troponin T is the tropomyosin-binding subunit of troponin, the thin filament regulatory complex which confers calcium-sensitivity to striated muscle actomyosin ATPase activity. The sequence is that of Troponin T, slow skeletal muscle (TNNT1) from Sus scrofa (Pig).